The sequence spans 289 residues: Fatty acid elongase 3-like (289 aa).

7 helical membrane passes run 35–55 (SFLF…HILL), 75–95 (SLLM…SAAA), 129–149 (VFFW…RTIF), 157–176 (LAVS…FLWL), 181–203 (SYQI…YRFW), 205–225 (GFGL…LVLV), and 248–268 (IGAW…FLNF).

This sequence belongs to the ELO family.

The protein localises to the membrane. Its function is as follows. Probable very long-chain fatty acid (VLCFA) elongase that controls VLCFA composition and functions to inhibit abscisic acid (ABA)-mediated stress responses, including regulation of stomatal aperture, maintenance of primary root growth and inhibition of germination. VLCFA pathway and products may function as signaling components acting upstream of sphingosine-1-phosphate, ceramide and the heterotrimeric G-protein complex, in lipid-mediated regulation of abiotic stress signaling. This chain is Fatty acid elongase 3-like (HOS3), found in Arabidopsis thaliana (Mouse-ear cress).